Consider the following 167-residue polypeptide: ATP synthase subunit b (167 aa).

A helical transmembrane segment spans residues 8–28; sequence AEAEFWVGAGLLIFLGIVFFG.

It belongs to the ATPase B chain family. In terms of assembly, F-type ATPases have 2 components, F(1) - the catalytic core - and F(0) - the membrane proton channel. F(1) has five subunits: alpha(3), beta(3), gamma(1), delta(1), epsilon(1). F(0) has three main subunits: a(1), b(2) and c(10-14). The alpha and beta chains form an alternating ring which encloses part of the gamma chain. F(1) is attached to F(0) by a central stalk formed by the gamma and epsilon chains, while a peripheral stalk is formed by the delta and b chains.

It is found in the cell inner membrane. Functionally, f(1)F(0) ATP synthase produces ATP from ADP in the presence of a proton or sodium gradient. F-type ATPases consist of two structural domains, F(1) containing the extramembraneous catalytic core and F(0) containing the membrane proton channel, linked together by a central stalk and a peripheral stalk. During catalysis, ATP synthesis in the catalytic domain of F(1) is coupled via a rotary mechanism of the central stalk subunits to proton translocation. Component of the F(0) channel, it forms part of the peripheral stalk, linking F(1) to F(0). In Phenylobacterium zucineum (strain HLK1), this protein is ATP synthase subunit b.